The following is a 164-amino-acid chain: HTH-type transcriptional regulator IscR (164 aa).

One can recognise an HTH rrf2-type domain in the interval 2–131 (RLTSKGRYAV…GSISLEELVK (130 aa)). The segment at residues 28 to 51 (LADISERQGISLSYLEQLFSRLRK) is a DNA-binding region (H-T-H motif). Positions 92, 98, and 104 each coordinate [2Fe-2S] cluster. The segment at 140–164 (DRQDSDKRRTPNGRPQETINVNLRA) is disordered. A compositionally biased stretch (polar residues) spans 152 to 164 (GRPQETINVNLRA).

The cofactor is [2Fe-2S] cluster.

In terms of biological role, regulates the transcription of several operons and genes involved in the biogenesis of Fe-S clusters and Fe-S-containing proteins. In Xenorhabdus nematophila (strain ATCC 19061 / DSM 3370 / CCUG 14189 / LMG 1036 / NCIMB 9965 / AN6), this protein is HTH-type transcriptional regulator IscR.